Reading from the N-terminus, the 153-residue chain is Regulatory protein RecX (153 aa).

This sequence belongs to the RecX family.

Its subcellular location is the cytoplasm. Functionally, modulates RecA activity. The chain is Regulatory protein RecX from Syntrophotalea carbinolica (strain DSM 2380 / NBRC 103641 / GraBd1) (Pelobacter carbinolicus).